Consider the following 229-residue polypeptide: Uracil-DNA glycosylase (229 aa).

Catalysis depends on Asp-64, which acts as the Proton acceptor.

This sequence belongs to the uracil-DNA glycosylase (UDG) superfamily. UNG family.

The protein localises to the cytoplasm. It catalyses the reaction Hydrolyzes single-stranded DNA or mismatched double-stranded DNA and polynucleotides, releasing free uracil.. Functionally, excises uracil residues from the DNA which can arise as a result of misincorporation of dUMP residues by DNA polymerase or due to deamination of cytosine. This is Uracil-DNA glycosylase from Shigella flexneri serotype 5b (strain 8401).